A 299-amino-acid chain; its full sequence is Peroxisomal biogenesis factor 19 (299 aa).

The tract at residues 1–63 (MAAAEEDYGV…SPGDTAKDSL (63 aa)) is disordered. Ala2 is subject to N-acetylalanine. The docking to the peroxisome membrane and binding to PEX3 stretch occupies residues 2 to 56 (AAAEEDYGVGAEADRELEELLESALDDFDKAKPSPAPPSTTTAPDASGPQKRSPG). Residues 2 to 91 (AAAEEDYGVG…QATAEFEKAM (90 aa)) form a necessary for PEX19 function on peroxisome biogenesis region. Acidic residues predominate over residues 16-27 (RELEELLESALD). 3 positions are modified to phosphoserine: Ser35, Ser54, and Ser66. Thr236 is subject to Phosphothreonine. Cys296 is modified (cysteine methyl ester). Cys296 carries the S-farnesyl cysteine lipid modification. The propeptide at 297–299 (LIM) is removed in mature form.

This sequence belongs to the peroxin-19 family. In terms of assembly, interacts with a broad range of peroxisomal membrane proteins, including PEX3, PEX10, PEX11A, PEX11B, PEX12, PEX13, PEX14 and PEX16, PXMP2/PMP22, PXMP4/PMP24, SLC25A17/PMP34, ABCD1/ALDP, ABCD2/ALDRP, and ABCD3/PMP70. Also interacts with the tumor suppressor CDKN2A/p19ARF.

It localises to the cytoplasm. The protein resides in the peroxisome membrane. Necessary for early peroxisomal biogenesis. Acts both as a cytosolic chaperone and as an import receptor for peroxisomal membrane proteins (PMPs). Binds and stabilizes newly synthesized PMPs in the cytoplasm by interacting with their hydrophobic membrane-spanning domains, and targets them to the peroxisome membrane by binding to the integral membrane protein PEX3. Excludes CDKN2A from the nucleus and prevents its interaction with MDM2, which results in active degradation of TP53. The sequence is that of Peroxisomal biogenesis factor 19 (PEX19) from Pongo abelii (Sumatran orangutan).